The primary structure comprises 824 residues: Phenylalanine--tRNA ligase beta subunit (824 aa).

The tRNA-binding domain occupies 39–153 (SEQAKNVVIG…NIPPIGSNAV (115 aa)). A B5 domain is found at 414-507 (KKSISVNLRM…RLIGYDNFDS (94 aa)). Residues aspartate 485, aspartate 491, glutamate 494, and glutamate 495 each contribute to the Mg(2+) site. One can recognise an FDX-ACB domain in the interval 730–823 (PTVPYMERDI…LKEKIKAELR (94 aa)).

It belongs to the phenylalanyl-tRNA synthetase beta subunit family. Type 1 subfamily. In terms of assembly, tetramer of two alpha and two beta subunits. Requires Mg(2+) as cofactor.

The protein localises to the cytoplasm. The catalysed reaction is tRNA(Phe) + L-phenylalanine + ATP = L-phenylalanyl-tRNA(Phe) + AMP + diphosphate + H(+). The protein is Phenylalanine--tRNA ligase beta subunit of Prochlorococcus marinus (strain NATL2A).